The primary structure comprises 266 residues: Undecaprenyl-diphosphatase (266 aa).

The next 7 helical transmembrane spans lie at 39–59, 86–106, 112–132, 147–167, 189–209, 216–236, and 246–266; these read PGASLSATIQLGSVIAIAYYF, SIFIGTIPIVLLGGSIKIFIP, VLRSNLSIALVSFLMAFFMYL, NFSNSFLIGIFQAFAIFPGVS, FSFLLGMPAISLAAIVEFVSS, LGFFPLFVGLITTFLSSLLAI, and NGLKIFIIYRVIFGVVILLNL.

This sequence belongs to the UppP family.

The protein localises to the cell inner membrane. The enzyme catalyses di-trans,octa-cis-undecaprenyl diphosphate + H2O = di-trans,octa-cis-undecaprenyl phosphate + phosphate + H(+). Its function is as follows. Catalyzes the dephosphorylation of undecaprenyl diphosphate (UPP). Confers resistance to bacitracin. This Prochlorococcus marinus (strain MIT 9301) protein is Undecaprenyl-diphosphatase.